A 1429-amino-acid polypeptide reads, in one-letter code: Autophagy-related protein 11 (1429 aa).

A disordered region spans residues 71–99 (TQRSQPGASSPPLSELPLPRYNAHTPPNS). Positions 80–89 (SPPLSELPLP) are enriched in low complexity. 4 coiled-coil regions span residues 143 to 173 (VMLR…KEWS), 553 to 590 (DDLL…QTQA), 632 to 815 (LETL…LEDI), and 851 to 989 (EGDM…RLES). Residues 1024–1061 (DGTMHIQRTPRSERSLATTANPNDSDPSSSLRRSSTLN) form a disordered region. The segment covering 1042-1061 (TANPNDSDPSSSLRRSSTLN) has biased composition (low complexity). A coiled-coil region spans residues 1105–1143 (ADAVYRRVKDVEHMARKLQREARAYREKAHSFQKEAHDK). Positions 1209–1229 (SKSLQHDQAGETRKDGARGET) are enriched in basic and acidic residues. Disordered regions lie at residues 1209–1241 (SKSL…DNPF) and 1336–1429 (SSRG…LIGP). A compositionally biased stretch (acidic residues) spans 1230–1239 (ESLDDDENDN). Composition is skewed to polar residues over residues 1345–1372 (ASET…QHMS) and 1383–1393 (QETPQQTNSIS).

It belongs to the ATG11 family. In terms of assembly, homodimer.

The protein localises to the preautophagosomal structure membrane. The protein resides in the vacuole membrane. Its function is as follows. Involved in cytoplasm to vacuole transport (Cvt), pexophagy, mitophagy and nucleophagy. Recruits mitochondria for their selective degradation via autophagy (mitophagy) during starvation. Works as scaffold proteins that recruit ATG proteins to the pre-autophagosome (PAS), the site of vesicle/autophagosome formation. Required for the Cvt vesicles completion. The sequence is that of Autophagy-related protein 11 (apg-8) from Neurospora crassa (strain ATCC 24698 / 74-OR23-1A / CBS 708.71 / DSM 1257 / FGSC 987).